The chain runs to 110 residues: IQ domain-containing protein J (110 aa).

The region spanning 47–67 is the IQ domain; that stretch reads ESKVKIIQRAWREYLQRQDPL. Residues 63–99 are disordered; sequence RQDPLEKRSPSPPSVSSDKLSSSVSMNTFSDSSTPVS. Low complexity predominate over residues 76-87; that stretch reads SVSSDKLSSSVS. Residues 88–99 are compositionally biased toward polar residues; sequence MNTFSDSSTPVS.

The sequence is that of IQ domain-containing protein J from Mus musculus (Mouse).